The primary structure comprises 317 residues: Apolipoprotein E (317 aa).

The signal sequence occupies residues 1–18 (MKVLWAALLVTFLAGCQA). A run of 8 repeats spans residues 80–101 (ALMDETMKELKAYKSELEEQLT), 102–123 (PVAEETRARLSKELQAAQARLG), 124–145 (ADMEDVRGRLAQYRGEVQAMLG), 146–167 (QSTEELRARLASHLRKLRKRLL), 168–189 (RDADDLQKRLAVYQAGAREGAE), 190–211 (RGVSAIRERLGPLVEQGRVRAA), 212–233 (TVGSLAGQPLQERAQAWGERLR), and 234–255 (ARMEEMGSRTRDRLDEVKEQVA). The 8 X 22 AA approximate tandem repeats stretch occupies residues 80–255 (ALMDETMKEL…RLDEVKEQVA (176 aa)). Met143 carries the methionine sulfoxide modification. Ser147 carries the phosphoserine modification. An LDL and other lipoprotein receptors binding region spans residues 158 to 168 (HLRKLRKRLLR). 162–165 (LRKR) serves as a coordination point for heparin. The lipid-binding and lipoprotein association stretch occupies residues 210 to 290 (AATVGSLAGQ…SWFEPLVEDM (81 aa)). 229 to 236 (GERLRARM) contacts heparin. The homooligomerization stretch occupies residues 266-317 (QQIRLQAEAFQARLKSWFEPLVEDMQRQWAGLVEKVQAAMGTSAAPVPSDNH). A specificity for association with VLDL region spans residues 278-290 (RLKSWFEPLVEDM).

The protein belongs to the apolipoprotein A1/A4/E family. In terms of assembly, homotetramer. May interact with ABCA1; functionally associated with ABCA1 in the biogenesis of HDLs. May interact with APP/A4 amyloid-beta peptide; the interaction is extremely stable in vitro but its physiological significance is unclear. May interact with MAPT. May interact with MAP2. In the cerebrospinal fluid, interacts with secreted SORL1. Interacts with PMEL; this allows the loading of PMEL luminal fragment on ILVs to induce fibril nucleation. Post-translationally, APOE exists as multiple glycosylated and sialylated glycoforms within cells and in plasma. The extent of glycosylation and sialylation are tissue and context specific. In terms of processing, glycated in plasma VLDL. Phosphorylated by FAM20C in the extracellular medium.

It is found in the secreted. Its subcellular location is the extracellular space. The protein localises to the extracellular matrix. The protein resides in the extracellular vesicle. It localises to the endosome. It is found in the multivesicular body. In terms of biological role, APOE is an apolipoprotein, a protein associating with lipid particles, that mainly functions in lipoprotein-mediated lipid transport between organs via the plasma and interstitial fluids. APOE is a core component of plasma lipoproteins and is involved in their production, conversion and clearance. Apolipoproteins are amphipathic molecules that interact both with lipids of the lipoprotein particle core and the aqueous environment of the plasma. As such, APOE associates with chylomicrons, chylomicron remnants, very low density lipoproteins (VLDL) and intermediate density lipoproteins (IDL) but shows a preferential binding to high-density lipoproteins (HDL). It also binds a wide range of cellular receptors including the LDL receptor/LDLR, the LDL receptor-related proteins LRP1, LRP2 and LRP8 and the very low-density lipoprotein receptor/VLDLR that mediate the cellular uptake of the APOE-containing lipoprotein particles. Finally, APOE also has a heparin-binding activity and binds heparan-sulfate proteoglycans on the surface of cells, a property that supports the capture and the receptor-mediated uptake of APOE-containing lipoproteins by cells. A main function of APOE is to mediate lipoprotein clearance through the uptake of chylomicrons, VLDLs, and HDLs by hepatocytes. APOE is also involved in the biosynthesis by the liver of VLDLs as well as their uptake by peripheral tissues ensuring the delivery of triglycerides and energy storage in muscle, heart and adipose tissues. By participating in the lipoprotein-mediated distribution of lipids among tissues, APOE plays a critical role in plasma and tissues lipid homeostasis. APOE is also involved in two steps of reverse cholesterol transport, the HDLs-mediated transport of cholesterol from peripheral tissues to the liver, and thereby plays an important role in cholesterol homeostasis. First, it is functionally associated with ABCA1 in the biogenesis of HDLs in tissues. Second, it is enriched in circulating HDLs and mediates their uptake by hepatocytes. APOE also plays an important role in lipid transport in the central nervous system, regulating neuron survival and sprouting. The polypeptide is Apolipoprotein E (APOE) (Gorilla gorilla gorilla (Western lowland gorilla)).